A 232-amino-acid chain; its full sequence is Ornithine carbamoyltransferase (232 aa).

Residues Gln15, Arg39, and 66 to 69 contribute to the carbamoyl phosphate site; that span reads HPTQ. Residues Asn99, Asp163, and 167-168 contribute to the L-ornithine site; that span reads SM. Carbamoyl phosphate-binding positions include 204 to 207 and Thr232; that span reads HCLP.

This sequence belongs to the aspartate/ornithine carbamoyltransferase superfamily. OTCase family.

The protein resides in the cytoplasm. It catalyses the reaction carbamoyl phosphate + L-ornithine = L-citrulline + phosphate + H(+). It participates in amino-acid biosynthesis; L-arginine biosynthesis; L-arginine from L-ornithine and carbamoyl phosphate: step 1/3. Functionally, reversibly catalyzes the transfer of the carbamoyl group from carbamoyl phosphate (CP) to the N(epsilon) atom of ornithine (ORN) to produce L-citrulline. The chain is Ornithine carbamoyltransferase (argF) from Neisseria sicca.